Consider the following 463-residue polypeptide: Hexokinase-7 (463 aa).

Positions 7–456 (AAAEQVVAAL…SGLGAALIAA (450 aa)) constitute a Hexokinase domain. The segment at 62–199 (NGTEEGLFYA…GLDMRVSALI (138 aa)) is hexokinase small subdomain. 3 residues coordinate ADP: glycine 76, threonine 77, and asparagine 78. Residues threonine 165, lysine 166, asparagine 200, and aspartate 201 each contribute to the D-glucose site. The tract at residues 200–445 (NDTVGTLAAG…KSVAVKLAND (246 aa)) is hexokinase large subdomain. Residue threonine 224 coordinates ADP. Asparagine 227, glutamate 255, and glutamate 286 together coordinate D-glucose. Position 410 (glycine 410) interacts with ADP.

The protein belongs to the hexokinase family. Expressed in roots, leaves, flowers, immature seeds and seed coat.

It is found in the cytoplasm. It carries out the reaction a D-hexose + ATP = a D-hexose 6-phosphate + ADP + H(+). The catalysed reaction is D-fructose + ATP = D-fructose 6-phosphate + ADP + H(+). The enzyme catalyses D-glucose + ATP = D-glucose 6-phosphate + ADP + H(+). It participates in carbohydrate metabolism; hexose metabolism. It functions in the pathway carbohydrate degradation; glycolysis; D-glyceraldehyde 3-phosphate and glycerone phosphate from D-glucose: step 1/4. Its function is as follows. Fructose and glucose phosphorylating enzyme. Functions in sugar signaling via a glycolysis-dependent manner under aerobic conditions, but its signaling role is suppressed when oxygen is deficient. This Oryza sativa subsp. japonica (Rice) protein is Hexokinase-7 (HXK7).